The primary structure comprises 817 residues: Lon protease 1 (817 aa).

Residues 18 to 216 form the Lon N-terminal domain; it reads VPLLPLRDII…KLYELMQGEI (199 aa). An ATP-binding site is contributed by 368 to 375; sequence GPPGVGKT. Residues 604–785 form the Lon proteolytic domain; that stretch reads EDQVGIVTGL…DDVLREALVL (182 aa). Active-site residues include Ser691 and Lys734. Positions 789–817 are disordered; the sequence is EEFGRKPTTDGGKLGGTTELPASPAVAPA.

Belongs to the peptidase S16 family. Homohexamer. Organized in a ring with a central cavity.

It localises to the cytoplasm. The catalysed reaction is Hydrolysis of proteins in presence of ATP.. In terms of biological role, ATP-dependent serine protease that mediates the selective degradation of mutant and abnormal proteins as well as certain short-lived regulatory proteins. Required for cellular homeostasis and for survival from DNA damage and developmental changes induced by stress. Degrades polypeptides processively to yield small peptide fragments that are 5 to 10 amino acids long. Binds to DNA in a double-stranded, site-specific manner. The protein is Lon protease 1 of Myxococcus xanthus.